Here is a 96-residue protein sequence, read N- to C-terminus: Large ribosomal subunit protein bL27 (96 aa).

Positions 1 to 9 are excised as a propeptide; it reads MLRLDLQFF.

It belongs to the bacterial ribosomal protein bL27 family. In terms of processing, the N-terminus is cleaved by ribosomal processing cysteine protease Prp.

This Geobacillus kaustophilus (strain HTA426) protein is Large ribosomal subunit protein bL27.